We begin with the raw amino-acid sequence, 78 residues long: Defensin-like protein 171 (78 aa).

The signal sequence occupies residues 1–23 (MAKTASSLVLPIIFLVMFALVEQ). Cystine bridges form between Cys27–Cys71, Cys34–Cys56, Cys40–Cys65, and Cys44–Cys67.

It belongs to the DEFL family.

Its subcellular location is the secreted. This Arabidopsis thaliana (Mouse-ear cress) protein is Defensin-like protein 171 (LCR61).